A 429-amino-acid polypeptide reads, in one-letter code: Serine hydroxymethyltransferase (429 aa).

(6S)-5,6,7,8-tetrahydrofolate contacts are provided by residues leucine 133 and 137–139 (GHL). Lysine 243 bears the N6-(pyridoxal phosphate)lysine mark. Position 259 (glutamate 259) interacts with (6S)-5,6,7,8-tetrahydrofolate.

Belongs to the SHMT family. In terms of assembly, homodimer. Pyridoxal 5'-phosphate is required as a cofactor.

Its subcellular location is the cytoplasm. It catalyses the reaction (6R)-5,10-methylene-5,6,7,8-tetrahydrofolate + glycine + H2O = (6S)-5,6,7,8-tetrahydrofolate + L-serine. It functions in the pathway one-carbon metabolism; tetrahydrofolate interconversion. The protein operates within amino-acid biosynthesis; glycine biosynthesis; glycine from L-serine: step 1/1. Functionally, catalyzes the reversible interconversion of serine and glycine with tetrahydrofolate (THF) serving as the one-carbon carrier. This reaction serves as the major source of one-carbon groups required for the biosynthesis of purines, thymidylate, methionine, and other important biomolecules. Also exhibits THF-independent aldolase activity toward beta-hydroxyamino acids, producing glycine and aldehydes, via a retro-aldol mechanism. This chain is Serine hydroxymethyltransferase, found in Aster yellows witches'-broom phytoplasma (strain AYWB).